The primary structure comprises 314 residues: 3'-5' exoribonuclease YhaM (314 aa).

One can recognise an HD domain in the interval 163-279; the sequence is HVVSMLDLAK…LHYIDNLDAK (117 aa).

Belongs to the YhaM family.

In terms of biological role, shows a 3'-5' exoribonuclease activity. This chain is 3'-5' exoribonuclease YhaM, found in Bacillus cereus (strain AH187).